The primary structure comprises 470 residues: Light-independent protochlorophyllide reductase subunit N (470 aa).

3 residues coordinate [4Fe-4S] cluster: cysteine 24, cysteine 49, and cysteine 109.

Belongs to the BchN/ChlN family. Protochlorophyllide reductase is composed of three subunits; ChlL, ChlN and ChlB. Forms a heterotetramer of two ChlB and two ChlN subunits. [4Fe-4S] cluster serves as cofactor.

It carries out the reaction chlorophyllide a + oxidized 2[4Fe-4S]-[ferredoxin] + 2 ADP + 2 phosphate = protochlorophyllide a + reduced 2[4Fe-4S]-[ferredoxin] + 2 ATP + 2 H2O. It functions in the pathway porphyrin-containing compound metabolism; chlorophyll biosynthesis (light-independent). In terms of biological role, component of the dark-operative protochlorophyllide reductase (DPOR) that uses Mg-ATP and reduced ferredoxin to reduce ring D of protochlorophyllide (Pchlide) to form chlorophyllide a (Chlide). This reaction is light-independent. The NB-protein (ChlN-ChlB) is the catalytic component of the complex. This Acaryochloris marina (strain MBIC 11017) protein is Light-independent protochlorophyllide reductase subunit N.